A 92-amino-acid chain; its full sequence is MNKQYSYPLDLSWSTEELASVLSFFNDVEAAYEGKVEAKKLLDSYKGFKAVVPSKSEEKRLGREFETVSGYSLYRAVQAAKEKGEGKISLGK.

The protein belongs to the UPF0223 family.

In Streptococcus pneumoniae serotype 4 (strain ATCC BAA-334 / TIGR4), this protein is UPF0223 protein SP_1404.